The chain runs to 394 residues: Guanine nucleotide-binding protein G(s) subunit alpha (394 aa).

The segment at 1 to 23 (MGCLGNSKTEDQRNEEKAQREAN) is disordered. Residue Gly2 is the site of N-palmitoyl glycine attachment. Cys3 carries S-palmitoyl cysteine lipidation. Over residues 8-23 (KTEDQRNEEKAQREAN) the composition is skewed to basic and acidic residues. Positions 39–394 (ATHRLLLLGA…RMHLRQYELL (356 aa)) constitute a G-alpha domain. Positions 42–55 (RLLLLGAGESGKST) are G1 motif. 47-55 (GAGESGKST) is a binding site for GTP. Residue Ser54 coordinates Mg(2+). The tract at residues 68-90 (FNGEGGEEDPQAARSNSDGEKAT) is disordered. The segment at 196 to 204 (DLLRCRVLT) is G2 motif. GTP-binding positions include 197 to 204 (LLRCRVLT), 223 to 227 (DVGGQ), 292 to 295 (NKQD), and Ala366. Thr204 serves as a coordination point for Mg(2+). Residues 219-228 (FHMFDVGGQR) are G3 motif. A G4 motif region spans residues 288–295 (ILFLNKQD). The tract at residues 364–369 (TCAVDT) is G5 motif.

It belongs to the G-alpha family. G(s) subfamily. As to quaternary structure, heterotrimeric G proteins are composed of 3 units; alpha, beta and gamma. The alpha chain contains the guanine nucleotide binding site. Interacts with CRY1; the interaction may block GPCR-mediated regulation of cAMP concentrations. Interacts with ADCY6 and stimulates its adenylyl cyclase activity. Interacts with ADCY2 and ADCY5. Stimulates the ADCY5 adenylyl cyclase activity. Interaction with SASH1.

It localises to the cell membrane. Its function is as follows. Guanine nucleotide-binding proteins (G proteins) function as transducers in numerous signaling pathways controlled by G protein-coupled receptors (GPCRs). Signaling involves the activation of adenylyl cyclases, resulting in increased levels of the signaling molecule cAMP. GNAS functions downstream of several GPCRs, including beta-adrenergic receptors. Stimulates the Ras signaling pathway via RAPGEF2. The sequence is that of Guanine nucleotide-binding protein G(s) subunit alpha (GNAS) from Cricetulus griseus (Chinese hamster).